The chain runs to 192 residues: Xanthine phosphoribosyltransferase (192 aa).

2 residues coordinate xanthine: Leu20 and Asn27. 128–132 (ANGDA) contacts 5-phospho-alpha-D-ribose 1-diphosphate. A xanthine-binding site is contributed by Lys156.

Belongs to the purine/pyrimidine phosphoribosyltransferase family. Xpt subfamily. Homodimer.

The protein localises to the cytoplasm. The catalysed reaction is XMP + diphosphate = xanthine + 5-phospho-alpha-D-ribose 1-diphosphate. It functions in the pathway purine metabolism; XMP biosynthesis via salvage pathway; XMP from xanthine: step 1/1. Converts the preformed base xanthine, a product of nucleic acid breakdown, to xanthosine 5'-monophosphate (XMP), so it can be reused for RNA or DNA synthesis. The chain is Xanthine phosphoribosyltransferase from Staphylococcus aureus (strain MRSA252).